A 194-amino-acid chain; its full sequence is Inosine triphosphate pyrophosphatase (194 aa).

Residue 8–13 (TGNANK) participates in ITP binding. Glu-47 serves as a coordination point for Mg(2+). ITP is bound by residues Lys-59, 75–76 (DT), Lys-92, 151–154 (FGWD), Lys-174, and 179–180 (HR).

It belongs to the HAM1 NTPase family. In terms of assembly, homodimer. Mg(2+) is required as a cofactor. Mn(2+) serves as cofactor.

It localises to the cytoplasm. The protein localises to the nucleus. It carries out the reaction ITP + H2O = IMP + diphosphate + H(+). The catalysed reaction is dITP + H2O = dIMP + diphosphate + H(+). It catalyses the reaction XTP + H2O = XMP + diphosphate + H(+). In terms of biological role, pyrophosphatase that hydrolyzes non-canonical purine nucleotides such as inosine triphosphate (ITP), deoxyinosine triphosphate (dITP) or xanthosine 5'-triphosphate (XTP) to their respective monophosphate derivatives. The enzyme does not distinguish between the deoxy- and ribose forms. Probably excludes non-canonical purines from RNA and DNA precursor pools, thus preventing their incorporation into RNA and DNA and avoiding chromosomal lesions. In Scheffersomyces stipitis (strain ATCC 58785 / CBS 6054 / NBRC 10063 / NRRL Y-11545) (Yeast), this protein is Inosine triphosphate pyrophosphatase.